Reading from the N-terminus, the 212-residue chain is RNA chaperone ProQ (212 aa).

Basic and acidic residues-rich tracts occupy residues 102-124 and 132-144; these read ALKE…EKAK and RKAD…DKPK. Residues 102-149 form a disordered region; sequence ALKESKERVFASRRTNTKEEKAKQPRRPAPRKADAAAKSDKPKAAPKA.

Belongs to the ProQ family.

Its subcellular location is the cytoplasm. RNA chaperone with significant RNA binding, RNA strand exchange and RNA duplexing activities. The chain is RNA chaperone ProQ from Aeromonas hydrophila subsp. hydrophila (strain ATCC 7966 / DSM 30187 / BCRC 13018 / CCUG 14551 / JCM 1027 / KCTC 2358 / NCIMB 9240 / NCTC 8049).